A 320-amino-acid chain; its full sequence is Cytochrome f (320 aa).

The N-terminal stretch at 1–35 (MQTRKTLSWIKEEITRSISVSLMIYIITGAYISNA) is a signal peptide. Heme-binding residues include Y36, C56, C59, and H60. The chain crosses the membrane as a helical span at residues 286 to 306 (VQGLLFFLASVILAQIFLVLK).

Belongs to the cytochrome f family. As to quaternary structure, the 4 large subunits of the cytochrome b6-f complex are cytochrome b6, subunit IV (17 kDa polypeptide, petD), cytochrome f and the Rieske protein, while the 4 small subunits are PetG, PetL, PetM and PetN. The complex functions as a dimer. The cofactor is heme.

It localises to the plastid. It is found in the chloroplast thylakoid membrane. Its function is as follows. Component of the cytochrome b6-f complex, which mediates electron transfer between photosystem II (PSII) and photosystem I (PSI), cyclic electron flow around PSI, and state transitions. This Populus alba (White poplar) protein is Cytochrome f.